The primary structure comprises 80 residues: Translational regulator CsrA (80 aa).

It belongs to the CsrA/RsmA family. Homodimer; the beta-strands of each monomer intercalate to form a hydrophobic core, while the alpha-helices form wings that extend away from the core.

It localises to the cytoplasm. A translational regulator that binds mRNA to regulate translation initiation and/or mRNA stability. Usually binds in the 5'-UTR at or near the Shine-Dalgarno sequence preventing ribosome-binding, thus repressing translation. Its main target seems to be the major flagellin gene, while its function is anatagonized by FliW. This chain is Translational regulator CsrA, found in Desulforamulus reducens (strain ATCC BAA-1160 / DSM 100696 / MI-1) (Desulfotomaculum reducens).